The sequence spans 880 residues: Alanine--tRNA ligase (880 aa).

Residues His-567, His-571, Cys-669, and His-673 each coordinate Zn(2+).

Belongs to the class-II aminoacyl-tRNA synthetase family. Requires Zn(2+) as cofactor.

Its subcellular location is the cytoplasm. It catalyses the reaction tRNA(Ala) + L-alanine + ATP = L-alanyl-tRNA(Ala) + AMP + diphosphate. Catalyzes the attachment of alanine to tRNA(Ala) in a two-step reaction: alanine is first activated by ATP to form Ala-AMP and then transferred to the acceptor end of tRNA(Ala). Also edits incorrectly charged Ser-tRNA(Ala) and Gly-tRNA(Ala) via its editing domain. The sequence is that of Alanine--tRNA ligase from Bacillus cereus (strain ZK / E33L).